The following is a 231-amino-acid chain: ATP synthase subunit a (231 aa).

5 helical membrane-spanning segments follow: residues 14–34 (GFLK…VLAV), 78–98 (YLGF…CTVI), 107–127 (SLST…FFGI), 174–194 (MIIG…MTAL), and 196–216 (LLTG…YIAA).

It belongs to the ATPase A chain family. In terms of assembly, F-type ATPases have 2 components, CF(1) - the catalytic core - and CF(0) - the membrane proton channel. CF(1) has five subunits: alpha(3), beta(3), gamma(1), delta(1), epsilon(1). CF(0) has three main subunits: a(1), b(2) and c(9-12). The alpha and beta chains form an alternating ring which encloses part of the gamma chain. CF(1) is attached to CF(0) by a central stalk formed by the gamma and epsilon chains, while a peripheral stalk is formed by the delta and b chains.

It is found in the cell inner membrane. Key component of the proton channel; it plays a direct role in the translocation of protons across the membrane. In Albidiferax ferrireducens (strain ATCC BAA-621 / DSM 15236 / T118) (Rhodoferax ferrireducens), this protein is ATP synthase subunit a.